The following is a 401-amino-acid chain: Putative TRAP transporter large permease protein HI_0050 (401 aa).

Transmembrane regions (helical) follow at residues 31–51 (FPLM…HGGI), 70–90 (LGYV…SAVA), 115–135 (GLIC…PMII), 144–164 (ITKL…GLWV), 193–213 (AFWP…GIFT), 217–237 (AGVV…GLTF), 253–273 (MVMF…VAQI), 290–310 (ILMF…DLIP), 330–350 (IAYF…TPPV), 353–373 (VLYV…KGIA), and 375–395 (FLFV…IVIV).

This sequence belongs to the TRAP transporter large permease family.

The protein localises to the cell inner membrane. This is Putative TRAP transporter large permease protein HI_0050 from Haemophilus influenzae (strain ATCC 51907 / DSM 11121 / KW20 / Rd).